Consider the following 348-residue polypeptide: Inositol 2-dehydrogenase/D-chiro-inositol 3-dehydrogenase (348 aa).

The protein belongs to the Gfo/Idh/MocA family. As to quaternary structure, homotetramer.

The catalysed reaction is myo-inositol + NAD(+) = scyllo-inosose + NADH + H(+). The enzyme catalyses 1D-chiro-inositol + NAD(+) = scyllo-inosine + NADH + H(+). Its pathway is polyol metabolism; myo-inositol degradation into acetyl-CoA; acetyl-CoA from myo-inositol: step 1/7. Its function is as follows. Involved in the oxidation of myo-inositol (MI) and D-chiro-inositol (DCI) to 2-keto-myo-inositol (2KMI or 2-inosose) and 1-keto-D-chiro-inositol (1KDCI), respectively. In Halalkalibacterium halodurans (strain ATCC BAA-125 / DSM 18197 / FERM 7344 / JCM 9153 / C-125) (Bacillus halodurans), this protein is Inositol 2-dehydrogenase/D-chiro-inositol 3-dehydrogenase.